A 495-amino-acid polypeptide reads, in one-letter code: COP9 signalosome complex subunit 2 (495 aa).

Residues 1–26 (MGDEYMDDDEDYGFEYEDDSGSEPDV) are disordered. One can recognise a PCI domain in the interval 254–416 (AHTDFFEAFK…GMIEMPKNKK (163 aa)). Positions 426-468 (PNAGDQGTTKSDSKPGTSSEPSTTTSVTSSILQGPPATSSCHQ) are disordered. Polar residues predominate over residues 430-441 (DQGTTKSDSKPG). Residues 442–455 (TSSEPSTTTSVTSS) show a composition bias toward low complexity.

The protein belongs to the CSN2 family. As to quaternary structure, component of the CSN complex, probably composed of csn-1, csn-2, csn-3, csn-4, csn-5, csn-6 and csn-7. Within the complex it probably interacts directly with csn-1, csn-3 and csn-4.

It is found in the cytoplasm. Its subcellular location is the nucleus. Functionally, essential component of the COP9 signalosome complex (CSN), a complex involved in various cellular and developmental processes. The CSN complex is an essential regulator of the ubiquitin (Ubl) conjugation pathway by mediating the deneddylation of the cullin subunits of the SCF-type E3 ligase complexes, leading to decrease the Ubl ligase activity of SCF. The CSN complex plays an essential role in embryogenesis and oogenesis and is required to regulate microtubule stability in the early embryo. Mediates mei-3/katanin targeting for degradation at the meiosis to mitosis transition via deneddylation of cul-3. In Caenorhabditis elegans, this protein is COP9 signalosome complex subunit 2 (csn-2).